We begin with the raw amino-acid sequence, 175 residues long: Peptide methionine sulfoxide reductase MsrA (175 aa).

Residue C12 is part of the active site.

This sequence belongs to the MsrA Met sulfoxide reductase family.

The enzyme catalyses L-methionyl-[protein] + [thioredoxin]-disulfide + H2O = L-methionyl-(S)-S-oxide-[protein] + [thioredoxin]-dithiol. It catalyses the reaction [thioredoxin]-disulfide + L-methionine + H2O = L-methionine (S)-S-oxide + [thioredoxin]-dithiol. Has an important function as a repair enzyme for proteins that have been inactivated by oxidation. Catalyzes the reversible oxidation-reduction of methionine sulfoxide in proteins to methionine. The chain is Peptide methionine sulfoxide reductase MsrA from Limosilactobacillus reuteri (strain DSM 20016) (Lactobacillus reuteri).